The following is a 489-amino-acid chain: Betaine aldehyde dehydrogenase (489 aa).

Residue Asn-93 participates in K(+) binding. Position 150 to 152 (150 to 152 (GAW)) interacts with NAD(+). The active-site Charge relay system is Lys-162. 176 to 179 (KPSE) provides a ligand contact to NAD(+). A K(+)-binding site is contributed by Val-180. 229 to 232 (EVGT) is an NAD(+) binding site. Position 245 (Leu-245) interacts with K(+). Glu-251 acts as the Proton acceptor in catalysis. Residues Gly-253, Cys-285, and Glu-386 each coordinate NAD(+). Cys-285 acts as the Nucleophile in catalysis. Position 285 is a cysteine sulfenic acid (-SOH) (Cys-285). 2 residues coordinate K(+): Lys-456 and Gly-459. Glu-463 functions as the Charge relay system in the catalytic mechanism.

It belongs to the aldehyde dehydrogenase family. Dimer of dimers. K(+) is required as a cofactor.

It carries out the reaction betaine aldehyde + NAD(+) + H2O = glycine betaine + NADH + 2 H(+). Its pathway is amine and polyamine biosynthesis; betaine biosynthesis via choline pathway; betaine from betaine aldehyde: step 1/1. Functionally, involved in the biosynthesis of the osmoprotectant glycine betaine. Catalyzes the irreversible oxidation of betaine aldehyde to the corresponding acid. This is Betaine aldehyde dehydrogenase from Chromohalobacter salexigens (strain ATCC BAA-138 / DSM 3043 / CIP 106854 / NCIMB 13768 / 1H11).